We begin with the raw amino-acid sequence, 561 residues long: Putative cuticle collagen 145 (561 aa).

A signal peptide spans methionine 1–threonine 30. A compositionally biased stretch (pro residues) spans threonine 100–proline 112. Disordered regions lie at residues threonine 100–proline 134, proline 148–proline 271, threonine 367–threonine 398, and threonine 422–leucine 540. Triple-helical region stretches follow at residues proline 102–aspartate 127 and glycine 153–asparagine 276. Composition is skewed to low complexity over residues alanine 164–aspartate 209 and alanine 219–proline 265. Positions threonine 367–proline 379 are enriched in pro residues. The interval lysine 413–aspartate 544 is triple-helical region. 2 stretches are compositionally biased toward low complexity: residues threonine 422–aspartate 467 and alanine 486–proline 532. The 59-residue stretch at glycine 485–asparagine 543 folds into the Collagen-like domain.

The protein belongs to the cuticular collagen family. As to quaternary structure, collagen polypeptide chains are complexed within the cuticle by disulfide bonds and other types of covalent cross-links.

In terms of biological role, nematode cuticles are composed largely of collagen-like proteins. The cuticle functions both as an exoskeleton and as a barrier to protect the worm from its environment. This chain is Putative cuticle collagen 145, found in Caenorhabditis briggsae.